Here is a 470-residue protein sequence, read N- to C-terminus: Heparan-sulfate 6-O-sulfotransferase 3 (470 aa).

The Cytoplasmic segment spans residues 1–4 (MDER). Residues 5 to 27 (FNKWLLTPVLTLLFVVIMYQYVS) traverse the membrane as a helical; Signal-anchor for type II membrane protein segment. Residues 28–470 (PSCTSSCTNF…EDYNSQVVRW (443 aa)) lie on the Lumenal side of the membrane. Positions 36-121 (NFGEQLRSGE…EAPENGSLPR (86 aa)) are disordered. The span at 88–113 (PEDEDEDPGDPEEEEEEEEEEPDPEA) shows a compositional bias: acidic residues. Asn-116 and Asn-127 each carry an N-linked (GlcNAc...) asparagine glycan. 151 to 159 (HIQKTGGTT) contributes to the 3'-phosphoadenylyl sulfate binding site. Substrate is bound by residues 181 to 182 (KK), Arg-198, Trp-203, and His-208. The active-site Proton acceptor is His-208. Asn-230 carries N-linked (GlcNAc...) asparagine glycosylation. 2 residues coordinate 3'-phosphoadenylyl sulfate: Arg-244 and Ser-252. Residues His-256 and Trp-263 each coordinate substrate. N-linked (GlcNAc...) asparagine glycosylation is found at Asn-323 and Asn-328. 3'-phosphoadenylyl sulfate is bound at residue 376–378 (TQF). A glycan (N-linked (GlcNAc...) asparagine) is linked at Asn-379. Position 382–383 (382–383 (RA)) interacts with 3'-phosphoadenylyl sulfate. Residues 421-453 (TKQLEHQRDRQKRREERRLQREHRAHRWPKEDR) are disordered. Over residues 422 to 439 (KQLEHQRDRQKRREERRL) the composition is skewed to basic and acidic residues.

Belongs to the sulfotransferase 6 family. Ubiquitously expressed.

It localises to the membrane. It carries out the reaction alpha-D-glucosaminyl-[heparan sulfate](n) + 3'-phosphoadenylyl sulfate = 6-sulfo-alpha-D-glucosaminyl-[heparan sulfate](n) + adenosine 3',5'-bisphosphate + H(+). Its function is as follows. 6-O-sulfation enzyme which catalyzes the transfer of sulfate from 3'-phosphoadenosine 5'-phosphosulfate (PAPS) to position 6 of the N-sulfoglucosamine residue (GlcNS) of heparan sulfate. The protein is Heparan-sulfate 6-O-sulfotransferase 3 (Hs6st3) of Mus musculus (Mouse).